Consider the following 190-residue polypeptide: Elongation factor P (190 aa).

Belongs to the elongation factor P family.

Its subcellular location is the cytoplasm. It participates in protein biosynthesis; polypeptide chain elongation. Its function is as follows. Involved in peptide bond synthesis. Stimulates efficient translation and peptide-bond synthesis on native or reconstituted 70S ribosomes in vitro. Probably functions indirectly by altering the affinity of the ribosome for aminoacyl-tRNA, thus increasing their reactivity as acceptors for peptidyl transferase. In Pseudomonas fluorescens (strain SBW25), this protein is Elongation factor P.